Here is a 434-residue protein sequence, read N- to C-terminus: E3 ubiquitin-protein ligase siah-1 (434 aa).

Positions 27 to 88 are disordered; the sequence is FEEDENAGPE…NGNTPSVTIP (62 aa). Residues 43-55 are compositionally biased toward low complexity; the sequence is SSSSASSQRSSAS. Over residues 74–88 the composition is skewed to polar residues; sequence MSNNQNGNTPSVTIP. The segment at 171–206 adopts an RING-type; degenerate zinc-finger fold; it reads CPVCLEYMLPPYMQCPSGHLVCSNCRPKLQCCPTCR. The segment at 220-415 is SBD; sequence IANTVRFPCK…LGINVTISRI (196 aa). The segment at 223 to 283 adopts an SIAH-type; degenerate zinc-finger fold; sequence TVRFPCKFSN…VMDHLKKVHK (61 aa). Zn(2+)-binding residues include Cys-228, Cys-235, His-247, Cys-251, Cys-258, Cys-265, His-277, and His-282.

The protein belongs to the SINA (Seven in absentia) family. As to quaternary structure, interacts with tir-1.

The catalysed reaction is S-ubiquitinyl-[E2 ubiquitin-conjugating enzyme]-L-cysteine + [acceptor protein]-L-lysine = [E2 ubiquitin-conjugating enzyme]-L-cysteine + N(6)-ubiquitinyl-[acceptor protein]-L-lysine.. The protein operates within protein modification; protein ubiquitination. Functionally, E3 ubiquitin-protein ligase that mediates ubiquitination and subsequent proteasomal degradation of target proteins. E3 ubiquitin ligases accept ubiquitin from an E2 ubiquitin-conjugating enzyme in the form of a thioester and then directly transfers the ubiquitin to targeted substrates. It probably triggers the ubiquitin-mediated degradation of different substrates. The chain is E3 ubiquitin-protein ligase siah-1 from Caenorhabditis briggsae.